Consider the following 527-residue polypeptide: MSSNKNQSDLNIPTNSASLKQKQRQQLGIKSEIGASTSDVYDPQVASYLSAGDSPSQFANTALHHSNSVGYSASAAAAAAELQHRAELQRRQQQLQQQELQHQQEQLQQYRQAQAQAQAQAQAQREHQQLQHAYQQQQQLHQLGQLSQQLAQPHLSQHEHVRDALTTDEFDTNEDLRSRYIENEIVKTFNSKAELVHFVKNELGPEERCKIVINSSKPKAVYFQCERSGSFRTTVKDATKRQRIAYTKRNKCAYRLVANLYPNEKDQKRKNKPDEPGHNEENSRISEMWVLRMINPQHNHAPDPINKKKRQKTSRTLVEKPINKPHHHHLLQQEQQQQQQQQQQQQQQQQQQQHNANSQAQQQAAQLQQQMQQQLQASGLPTTPNYSELLGQLGQLSQQQSQQQQLHHIPQQRQRTQSQQSQQQPQQTAHGLDQPDAAVIAAIEASAAAAVASQGSPNVTAAAVAALQHTQGNEHDAQQQQDRGGNNGGAIDSNVDPSLDPNVDPNVQAHDHSHGLRNSYGKRSGFL.

5 disordered regions span residues 1–36, 258–281, 328–365, 395–433, and 470–527; these read MSSNKNQSDLNIPTNSASLKQKQRQQLGIKSEIGAS, ANLYPNEKDQKRKNKPDEPGHNEE, HHLLQQEQQQQQQQQQQQQQQQQQQQHNANSQAQQQAA, QLSQQQSQQQQLHHIPQQRQRTQSQQSQQQPQQTAHGLD, and TQGN…SGFL. The DNA-binding element occupies 160–300; it reads HVRDALTTDE…LRMINPQHNH (141 aa). The span at 263 to 281 shows a compositional bias: basic and acidic residues; it reads NEKDQKRKNKPDEPGHNEE. Composition is skewed to low complexity over residues 332–365 and 395–428; these read QQEQQQQQQQQQQQQQQQQQQQHNANSQAQQQAA and QLSQQQSQQQQLHHIPQQRQRTQSQQSQQQPQQT.

The protein belongs to the RBF1 family.

The protein localises to the nucleus. The protein resides in the chromosome. Its subcellular location is the telomere. Functionally, transcriptional activator that binds to the RPG box and to telomeres. Involved in the regulation of the transition between yeast and filamentous forms and plays a role in virulence. Induces expression of HWP1, a major hyphal cell protein and virulence factor. The chain is Transcription factor RBF1 (RBF1) from Candida albicans (Yeast).